Consider the following 252-residue polypeptide: Chitooligosaccharide deacetylase (252 aa).

The Mg(2+) site is built by H61 and H125.

Belongs to the YdjC deacetylase family. ChbG subfamily. As to quaternary structure, homodimer. Requires Mg(2+) as cofactor.

Its subcellular location is the cytoplasm. It carries out the reaction N,N'-diacetylchitobiose + H2O = N-acetyl-beta-D-glucosaminyl-(1-&gt;4)-D-glucosamine + acetate. The catalysed reaction is diacetylchitobiose-6'-phosphate + H2O = N'-monoacetylchitobiose-6'-phosphate + acetate. It functions in the pathway glycan degradation; chitin degradation. Involved in the degradation of chitin. ChbG is essential for growth on the acetylated chitooligosaccharides chitobiose and chitotriose but is dispensable for growth on cellobiose and chitosan dimer, the deacetylated form of chitobiose. Deacetylation of chitobiose-6-P and chitotriose-6-P is necessary for both the activation of the chb promoter by the regulatory protein ChbR and the hydrolysis of phosphorylated beta-glucosides by the phospho-beta-glucosidase ChbF. Catalyzes the removal of only one acetyl group from chitobiose-6-P to yield monoacetylchitobiose-6-P, the inducer of ChbR and the substrate of ChbF. This chain is Chitooligosaccharide deacetylase, found in Salmonella newport (strain SL254).